The sequence spans 210 residues: Beta-crystallin A4 (210 aa).

Residues methionine 1–histidine 25 form an N-terminal arm region. 2 consecutive Beta/gamma crystallin 'Greek key' domains span residues tryptophan 26–serine 65 and glycine 66–alanine 112. Residues cysteine 113–aspartate 118 are connecting peptide. 2 Beta/gamma crystallin 'Greek key' domains span residues serine 119 to serine 160 and glycine 161 to glutamine 209.

It belongs to the beta/gamma-crystallin family. As to quaternary structure, homo/heterodimer, or complexes of higher-order. The structure of beta-crystallin oligomers seems to be stabilized through interactions between the N-terminal arms.

In terms of biological role, crystallins are the dominant structural components of the vertebrate eye lens. This chain is Beta-crystallin A4 (CRYBA4), found in Bos taurus (Bovine).